The sequence spans 429 residues: Probable M18 family aminopeptidase 2 (429 aa).

Zn(2+) is bound by residues H82, H156, and H401.

This sequence belongs to the peptidase M18 family. Requires Zn(2+) as cofactor.

This is Probable M18 family aminopeptidase 2 from Pseudomonas aeruginosa (strain UCBPP-PA14).